A 92-amino-acid chain; its full sequence is Small ribosomal subunit protein uS19 (92 aa).

The protein belongs to the universal ribosomal protein uS19 family.

Protein S19 forms a complex with S13 that binds strongly to the 16S ribosomal RNA. In Staphylococcus epidermidis (strain ATCC 35984 / DSM 28319 / BCRC 17069 / CCUG 31568 / BM 3577 / RP62A), this protein is Small ribosomal subunit protein uS19.